The following is a 320-amino-acid chain: D-alanine--D-alanine ligase (320 aa).

The ATP-grasp domain maps to 101–317 (KMIFQGAGLP…FSELVCKILS (217 aa)). 148-203 (INQLGLPLIVKPSREGSSFGMTKVEHLDQLDDALKKAWHYDEEILVEKWHFGTELT) is a binding site for ATP. Aspartate 271, glutamate 284, and asparagine 286 together coordinate Mg(2+).

The protein belongs to the D-alanine--D-alanine ligase family. The cofactor is Mg(2+). It depends on Mn(2+) as a cofactor.

Its subcellular location is the cytoplasm. It carries out the reaction 2 D-alanine + ATP = D-alanyl-D-alanine + ADP + phosphate + H(+). The protein operates within cell wall biogenesis; peptidoglycan biosynthesis. Its function is as follows. Cell wall formation. The polypeptide is D-alanine--D-alanine ligase (Hamiltonella defensa subsp. Acyrthosiphon pisum (strain 5AT)).